The following is a 152-amino-acid chain: MKMLLDDLYEIVEPITADLGYILWGIEVVGSGKLTIRIFIDHENGVSVDDCQIVSKEISAVFDVEDPVSGKYILEVSSPGMNRQIFNIIQAQALVGFNVKAVTLAPVGSQTKFKGVLERVEGNNVILNLEDGKEISFDFDELKKLRVSPDFS.

The protein belongs to the RimP family.

It localises to the cytoplasm. Required for maturation of 30S ribosomal subunits. The protein is Ribosome maturation factor RimP of Francisella tularensis subsp. tularensis (strain FSC 198).